A 250-amino-acid chain; its full sequence is Cobalt transport protein CbiM (250 aa).

The N-terminal stretch at 1–27 (MKKPLFFIASACVTIYILFALSPSVYA) is a signal peptide. Helical transmembrane passes span 33–53 (GFLP…FFLV), 70–90 (LLLA…IPSV), 102–122 (LGAL…VLLF), 134–154 (TLGA…YVLF), 168–188 (VFLA…IQLA), and 208–228 (IFAV…VVVW).

The protein belongs to the CbiM family. As to quaternary structure, forms an energy-coupling factor (ECF) transporter complex composed of an ATP-binding protein (A component, CbiO), a transmembrane protein (T component, CbiQ) and 2 possible substrate-capture proteins (S components, CbiM and CbiN) of unknown stoichimetry.

It localises to the cell membrane. It participates in cofactor biosynthesis; adenosylcobalamin biosynthesis. In terms of biological role, part of the energy-coupling factor (ECF) transporter complex CbiMNOQ involved in cobalt import. The protein is Cobalt transport protein CbiM of Anoxybacillus flavithermus (strain DSM 21510 / WK1).